Here is a 359-residue protein sequence, read N- to C-terminus: DNA polymerase IV (359 aa).

Positions 4-184 constitute a UmuC domain; it reads IVHVDMDAFY…LKVNRIPGVG (181 aa). Residues D8 and D102 each coordinate Mg(2+). E103 is a catalytic residue.

It belongs to the DNA polymerase type-Y family. Monomer. The cofactor is Mg(2+).

It localises to the cytoplasm. It catalyses the reaction DNA(n) + a 2'-deoxyribonucleoside 5'-triphosphate = DNA(n+1) + diphosphate. Its function is as follows. Poorly processive, error-prone DNA polymerase involved in untargeted mutagenesis. Copies undamaged DNA at stalled replication forks, which arise in vivo from mismatched or misaligned primer ends. These misaligned primers can be extended by PolIV. Exhibits no 3'-5' exonuclease (proofreading) activity. May be involved in translesional synthesis, in conjunction with the beta clamp from PolIII. The sequence is that of DNA polymerase IV from Xanthomonas euvesicatoria pv. vesicatoria (strain 85-10) (Xanthomonas campestris pv. vesicatoria).